A 338-amino-acid polypeptide reads, in one-letter code: Ketol-acid reductoisomerase (NADP(+)) (338 aa).

One can recognise a KARI N-terminal Rossmann domain in the interval 1 to 181; that stretch reads MKVYYDSDAD…GGGRAGIIET (181 aa). NADP(+) is bound by residues 24–27, Arg47, Ser50, Ser52, and 82–85; these read YGSQ and DEHQ. The active site involves His107. Gly133 is an NADP(+) binding site. In terms of domain architecture, KARI C-terminal knotted spans 182-327; it reads SFKEETETDL…AKLRAMMPWI (146 aa). Asp190, Glu194, Glu226, and Glu230 together coordinate Mg(2+). Substrate is bound at residue Ser251.

The protein belongs to the ketol-acid reductoisomerase family. Mg(2+) is required as a cofactor.

The catalysed reaction is (2R)-2,3-dihydroxy-3-methylbutanoate + NADP(+) = (2S)-2-acetolactate + NADPH + H(+). It catalyses the reaction (2R,3R)-2,3-dihydroxy-3-methylpentanoate + NADP(+) = (S)-2-ethyl-2-hydroxy-3-oxobutanoate + NADPH + H(+). Its pathway is amino-acid biosynthesis; L-isoleucine biosynthesis; L-isoleucine from 2-oxobutanoate: step 2/4. The protein operates within amino-acid biosynthesis; L-valine biosynthesis; L-valine from pyruvate: step 2/4. Its function is as follows. Involved in the biosynthesis of branched-chain amino acids (BCAA). Catalyzes an alkyl-migration followed by a ketol-acid reduction of (S)-2-acetolactate (S2AL) to yield (R)-2,3-dihydroxy-isovalerate. In the isomerase reaction, S2AL is rearranged via a Mg-dependent methyl migration to produce 3-hydroxy-3-methyl-2-ketobutyrate (HMKB). In the reductase reaction, this 2-ketoacid undergoes a metal-dependent reduction by NADPH to yield (R)-2,3-dihydroxy-isovalerate. This chain is Ketol-acid reductoisomerase (NADP(+)), found in Magnetococcus marinus (strain ATCC BAA-1437 / JCM 17883 / MC-1).